The sequence spans 223 residues: Ras-related protein RABA4c (223 aa).

22–29 (GDSAVGKS) is a GTP binding site. The short motif at 44–52 (SKATIGVEF) is the Effector region element. GTP contacts are provided by residues 70-74 (DTAGQ), 128-131 (NKTD), and 158-159 (SA). 2 S-geranylgeranyl cysteine lipidation sites follow: Cys219 and Cys220.

The protein belongs to the small GTPase superfamily. Rab family.

It localises to the cell membrane. Functionally, intracellular vesicle trafficking and protein transport. This is Ras-related protein RABA4c (RABA4C) from Arabidopsis thaliana (Mouse-ear cress).